Consider the following 676-residue polypeptide: Genetic interactor of prohibitins 3, mitochondrial (676 aa).

Residues 1–48 constitute a mitochondrion transit peptide; that stretch reads MIRYSGFSVVRSCLSRTFSRNNSALSTAITSSLLTNLFPTCKSCGVRL. Positions 98–110 are enriched in basic and acidic residues; sequence SKKVSDSESRSES. Positions 98-117 are disordered; that stretch reads SKKVSDSESRSESQDLSNEA. One can recognise a CP-type G domain in the interval 180 to 395; that stretch reads LELLDNIMSR…IYDVPGFVNS (216 aa).

Belongs to the TRAFAC class YlqF/YawG GTPase family. GEP3 subfamily.

It localises to the mitochondrion. May be involved in the mitochondrial lipid metabolism. The chain is Genetic interactor of prohibitins 3, mitochondrial (GEP3) from Scheffersomyces stipitis (strain ATCC 58785 / CBS 6054 / NBRC 10063 / NRRL Y-11545) (Yeast).